We begin with the raw amino-acid sequence, 469 residues long: Chromosomal replication initiator protein DnaA (469 aa).

The domain I, interacts with DnaA modulators stretch occupies residues 1–83 (MSEWDYKIFW…KKISIDFIIK (83 aa)). The interval 83 to 128 (KPNTSEDLSKAENEGGNDKKEDAAKPSSAESKKKSVKTEGGRGQHP) is domain II. The segment at 89–131 (DLSKAENEGGNDKKEDAAKPSSAESKKKSVKTEGGRGQHPDLR) is disordered. A domain III, AAA+ region region spans residues 129-344 (DLRPEYNFED…AALTKLIAYT (216 aa)). ATP-binding residues include glycine 173, glycine 175, lysine 176, and threonine 177. The interval 345–469 (ELTKKTMDEA…RNTIKENTNK (125 aa)) is domain IV, binds dsDNA.

It belongs to the DnaA family. In terms of assembly, oligomerizes as a right-handed, spiral filament on DNA at oriC.

It is found in the cytoplasm. In terms of biological role, plays an essential role in the initiation and regulation of chromosomal replication. ATP-DnaA binds to the origin of replication (oriC) to initiate formation of the DNA replication initiation complex once per cell cycle. Binds the DnaA box (a 9 base pair repeat at the origin) and separates the double-stranded (ds)DNA. Forms a right-handed helical filament on oriC DNA; dsDNA binds to the exterior of the filament while single-stranded (ss)DNA is stabiized in the filament's interior. The ATP-DnaA-oriC complex binds and stabilizes one strand of the AT-rich DNA unwinding element (DUE), permitting loading of DNA polymerase. After initiation quickly degrades to an ADP-DnaA complex that is not apt for DNA replication. Binds acidic phospholipids. This Treponema denticola (strain ATCC 35405 / DSM 14222 / CIP 103919 / JCM 8153 / KCTC 15104) protein is Chromosomal replication initiator protein DnaA.